Consider the following 179-residue polypeptide: uncharacterized protein (179 aa).

Over residues 26–39 (AAKLAAATTPTHTA) the composition is skewed to low complexity. Positions 26–179 (AAKLAAATTP…RPRRNTLRHM (154 aa)) are disordered. The segment covering 150-165 (RQSVTQSTAARQTQPH) has biased composition (polar residues). The span at 167 to 179 (GRPRPRRNTLRHM) shows a compositional bias: basic residues.

This is an uncharacterized protein from Equus caballus (Horse).